Consider the following 88-residue polypeptide: Small cysteine and glycine repeat-containing protein 1 (88 aa).

Positions 4 to 72 (CGCGGCGGCG…TCSSCGYSCG (69 aa)) are 10 X 2 AA repeats of CG.

It belongs to the KRTAP type 28 family.

In the hair cortex, hair keratin intermediate filaments are embedded in an interfilamentous matrix, consisting of hair keratin-associated proteins (KRTAP), which are essential for the formation of a rigid and resistant hair shaft through their extensive disulfide bond cross-linking with abundant cysteine residues of hair keratins. The matrix proteins include the high-sulfur and high-glycine-tyrosine keratins. The chain is Small cysteine and glycine repeat-containing protein 1 from Homo sapiens (Human).